Consider the following 96-residue polypeptide: ATP synthase subunit e, mitochondrial (96 aa).

Ser2 carries the post-translational modification N-acetylserine.

Belongs to the ATPase e subunit family. F-type ATPases have 2 components, CF(1) - the catalytic core - and CF(0) - the membrane proton channel. In yeast, the dimeric form of ATP synthase consists of 17 polypeptides: alpha, beta, gamma, delta, epsilon, 4 (B), 5 (OSCP), 6 (A), 8, 9 (C), d, E (Tim11), f, g, h, i/j and k.

It is found in the mitochondrion. It localises to the mitochondrion inner membrane. In terms of biological role, mitochondrial membrane ATP synthase (F(1)F(0) ATP synthase or Complex V) produces ATP from ADP in the presence of a proton gradient across the membrane which is generated by electron transport complexes of the respiratory chain. F-type ATPases consist of two structural domains, F(1) - containing the extramembraneous catalytic core, and F(0) - containing the membrane proton channel, linked together by a central stalk and a peripheral stalk. During catalysis, ATP synthesis in the catalytic domain of F(1) is coupled via a rotary mechanism of the central stalk subunits to proton translocation. Part of the complex F(0) domain. Minor subunit located with subunit a in the membrane. In Saccharomyces cerevisiae (strain ATCC 204508 / S288c) (Baker's yeast), this protein is ATP synthase subunit e, mitochondrial (TIM11).